Reading from the N-terminus, the 627-residue chain is 1-deoxy-D-xylulose-5-phosphate synthase (627 aa).

Residues histidine 80 and 121-123 each bind thiamine diphosphate; that span reads GHS. Aspartate 152 is a binding site for Mg(2+). Residues 153-154, asparagine 181, tyrosine 288, and glutamate 370 contribute to the thiamine diphosphate site; that span reads GA. Asparagine 181 contributes to the Mg(2+) binding site.

The protein belongs to the transketolase family. DXPS subfamily. As to quaternary structure, homodimer. Mg(2+) is required as a cofactor. Thiamine diphosphate serves as cofactor.

The catalysed reaction is D-glyceraldehyde 3-phosphate + pyruvate + H(+) = 1-deoxy-D-xylulose 5-phosphate + CO2. Its pathway is metabolic intermediate biosynthesis; 1-deoxy-D-xylulose 5-phosphate biosynthesis; 1-deoxy-D-xylulose 5-phosphate from D-glyceraldehyde 3-phosphate and pyruvate: step 1/1. Functionally, catalyzes the acyloin condensation reaction between C atoms 2 and 3 of pyruvate and glyceraldehyde 3-phosphate to yield 1-deoxy-D-xylulose-5-phosphate (DXP). This Aliivibrio fischeri (strain ATCC 700601 / ES114) (Vibrio fischeri) protein is 1-deoxy-D-xylulose-5-phosphate synthase.